A 148-amino-acid polypeptide reads, in one-letter code: uncharacterized protein (148 aa).

The chain crosses the membrane as a helical span at residues 7–29 (MLILMSLVKIVLTCLPTGVIEWL).

The protein localises to the membrane. This is an uncharacterized protein from Bacillus subtilis (strain 168).